The chain runs to 206 residues: Geminin (206 aa).

Positions 1-18 (MNLSMKQKQEGAQENVKN) are enriched in polar residues. A disordered region spans residues 1–42 (MNLSMKQKQEGAQENVKNSPVPRRTLKMIQPSADGSLVGREN). An N6-acetyllysine modification is found at lysine 27. Phosphoserine is present on residues serine 36, serine 63, and serine 64. The necessary and sufficient for interaction with IDAS and CDT1 stretch occupies residues 79 to 158 (TQEAFDLISK…AEVIERLSNE (80 aa)). A coiled-coil region spans residues 91–141 (PSSQYWKEVAEQRRKALYEALKENEKLHKEIEQKDSEIARLRKENKDLAEV). Positions 157–206 (NEPLDNFESPDSQEFDSEEEAVEYSELEDSGAGTCAEETVSSSTDARPCT) are disordered. A compositionally biased stretch (acidic residues) spans 167-185 (DSQEFDSEEEAVEYSELED). Positions 167-187 (DSQEFDSEEEAVEYSELEDSG) are homeodomain binding. Serine 181 is modified (phosphoserine; by CK2). Residues 195–206 (TVSSSTDARPCT) show a composition bias toward polar residues.

This sequence belongs to the geminin family. Homotetramer. Interacts with CDT1; this inhibits binding of the MCM complex to origins of replication. The complex with CDT1 exists in two forms, a 'permissive' heterotrimer and an 'inhibitory' heterohexamer. Interacts (via coiled-coil domain) with IDAS (via coiled-coil domain); this targets GMNN to the nucleus. The heterodimer formed by GMNN and MCIDAS has much lower affinity for CDT1 than the GMNN homodimer. Interacts with a subset of Hox proteins, affinity increasing from anterior to posterior types, the strongest interaction being with HOXB1, HOXC9 and HOXD10. Interacts with LRWD1 from G1/S to mitosis. Phosphorylated during mitosis. Phosphorylation at Ser-181 by CK2 results in enhanced binding to Hox proteins and more potent inhibitory effect on Hox transcriptional activity.

It is found in the cytoplasm. It localises to the nucleus. Inhibits DNA replication by preventing the incorporation of MCM complex into pre-replication complex (pre-RC). It is degraded during the mitotic phase of the cell cycle. Its destruction at the metaphase-anaphase transition permits replication in the succeeding cell cycle. Inhibits histone acetyltransferase activity of KAT7/HBO1 in a CDT1-dependent manner, inhibiting histone H4 acetylation and DNA replication licensing. Inhibits the transcriptional activity of a subset of Hox proteins, enrolling them in cell proliferative control. The protein is Geminin (Gmnn) of Mus musculus (Mouse).